Consider the following 266-residue polypeptide: Histidinol-phosphatase (266 aa).

4 residues coordinate Mg(2+): glutamate 69, aspartate 84, isoleucine 86, and aspartate 87. Glutamate 69 is a binding site for substrate. Residues 86 to 89, arginine 190, and aspartate 218 contribute to the substrate site; that span reads IDGT. Residue aspartate 218 coordinates Mg(2+).

It belongs to the inositol monophosphatase superfamily. It depends on Mg(2+) as a cofactor.

The enzyme catalyses L-histidinol phosphate + H2O = L-histidinol + phosphate. It functions in the pathway amino-acid biosynthesis; L-histidine biosynthesis; L-histidine from 5-phospho-alpha-D-ribose 1-diphosphate: step 8/9. Functionally, catalyzes the dephosphorylation of histidinol-phosphate to histidinol, the direct precursor of histidine. The protein is Histidinol-phosphatase of Streptomyces coelicolor (strain ATCC BAA-471 / A3(2) / M145).